The chain runs to 597 residues: C4b-binding protein alpha chain (597 aa).

The first 48 residues, 1 to 48 (MHPPKTPSGALHRKRKMAAWPFSRLWKVSDPILFQMTLIAALLPAVLG), serve as a signal peptide directing secretion. 8 Sushi domains span residues 49-110 (NCGP…FCIY), 111-172 (KRCR…QCEI), 173-236 (VKCK…TCEK), 237-296 (ITCR…ACEP), 297-362 (NSCI…GCEA), 363-424 (LCCP…SCGD), 425-482 (ICNF…QCKA), and 483-540 (LCRK…KCEW). Cystine bridges form between cysteine 50-cysteine 96, cysteine 81-cysteine 108, cysteine 113-cysteine 154, cysteine 140-cysteine 170, cysteine 175-cysteine 217, cysteine 203-cysteine 234, cysteine 239-cysteine 281, cysteine 267-cysteine 294, cysteine 299-cysteine 348, cysteine 332-cysteine 360, cysteine 365-cysteine 409, cysteine 399-cysteine 422, cysteine 426-cysteine 468, cysteine 454-cysteine 480, cysteine 484-cysteine 525, and cysteine 511-cysteine 538. N-linked (GlcNAc...) asparagine glycosylation occurs at asparagine 221. N-linked (GlcNAc...) asparagine glycosylation is found at asparagine 506 and asparagine 528.

In terms of assembly, disulfide-linked complex of alpha and beta chains of 3 possible sorts: a 570 kDa complex of 7 alpha chains and 1 beta chain, a 530 kDa homoheptamer of alpha chains or a 500 kDa complex of 6 alpha chains and 1 beta chain. The central body of the alpha chain homomer supports tentacles, each with the binding site for C4b at the end. (Microbial infection) Interacts with Staphylococcus aureus protein SdrE; this interaction inhibits complement-mediated bacterial opsonization. As to expression, chylomicrons in the plasma.

It is found in the secreted. Its function is as follows. Controls the classical pathway of complement activation. It binds as a cofactor to C3b/C4b inactivator (C3bINA), which then hydrolyzes the complement fragment C4b. It also accelerates the degradation of the C4bC2a complex (C3 convertase) by dissociating the complement fragment C2a. Alpha chain binds C4b. It also interacts with anticoagulant protein S and with serum amyloid P component. This chain is C4b-binding protein alpha chain (C4BPA), found in Homo sapiens (Human).